The following is a 179-amino-acid chain: Large ribosomal subunit protein uL6 (179 aa).

It belongs to the universal ribosomal protein uL6 family. As to quaternary structure, part of the 50S ribosomal subunit.

Functionally, this protein binds to the 23S rRNA, and is important in its secondary structure. It is located near the subunit interface in the base of the L7/L12 stalk, and near the tRNA binding site of the peptidyltransferase center. In Chlorobaculum tepidum (strain ATCC 49652 / DSM 12025 / NBRC 103806 / TLS) (Chlorobium tepidum), this protein is Large ribosomal subunit protein uL6.